Consider the following 675-residue polypeptide: Potassium-transporting ATPase ATP-binding subunit (675 aa).

The next 4 helical transmembrane spans lie at 34 to 54 (IMFV…FPDI), 65 to 85 (LITI…SEAF), 216 to 236 (IALF…IVTL), and 245 to 265 (LILP…TTIG). Asp304 serves as the catalytic 4-aspartylphosphate intermediate. ATP contacts are provided by residues Asp341, Glu345, 372-379 (FTAETRMS), and Lys390. The Mg(2+) site is built by Asp513 and Asp517. 3 consecutive transmembrane segments (helical) span residues 569 to 591 (ALTT…ALMM), 611 to 631 (AIIS…PIAM), and 644 to 664 (IFIN…FLGI).

It belongs to the cation transport ATPase (P-type) (TC 3.A.3) family. Type IA subfamily. In terms of assembly, the system is composed of three essential subunits: KdpA, KdpB and KdpC.

Its subcellular location is the cell membrane. The catalysed reaction is K(+)(out) + ATP + H2O = K(+)(in) + ADP + phosphate + H(+). Functionally, part of the high-affinity ATP-driven potassium transport (or Kdp) system, which catalyzes the hydrolysis of ATP coupled with the electrogenic transport of potassium into the cytoplasm. This subunit is responsible for energy coupling to the transport system and for the release of the potassium ions to the cytoplasm. In Staphylococcus aureus (strain MSSA476), this protein is Potassium-transporting ATPase ATP-binding subunit.